The following is a 162-amino-acid chain: ATP synthase subunit b (162 aa).

Residues 8–28 (LTGIIQLLNFLILLFVLYKFL) form a helical membrane-spanning segment.

It belongs to the ATPase B chain family. F-type ATPases have 2 components, F(1) - the catalytic core - and F(0) - the membrane proton channel. F(1) has five subunits: alpha(3), beta(3), gamma(1), delta(1), epsilon(1). F(0) has three main subunits: a(1), b(2) and c(10-14). The alpha and beta chains form an alternating ring which encloses part of the gamma chain. F(1) is attached to F(0) by a central stalk formed by the gamma and epsilon chains, while a peripheral stalk is formed by the delta and b chains.

It is found in the cell inner membrane. Functionally, f(1)F(0) ATP synthase produces ATP from ADP in the presence of a proton or sodium gradient. F-type ATPases consist of two structural domains, F(1) containing the extramembraneous catalytic core and F(0) containing the membrane proton channel, linked together by a central stalk and a peripheral stalk. During catalysis, ATP synthesis in the catalytic domain of F(1) is coupled via a rotary mechanism of the central stalk subunits to proton translocation. Component of the F(0) channel, it forms part of the peripheral stalk, linking F(1) to F(0). In Pseudothermotoga lettingae (strain ATCC BAA-301 / DSM 14385 / NBRC 107922 / TMO) (Thermotoga lettingae), this protein is ATP synthase subunit b.